The following is a 413-amino-acid chain: NAD-dependent dihydropyrimidine dehydrogenase subunit PreT homolog (413 aa).

Residue Glu287 participates in NAD(+) binding.

This sequence belongs to the NADH dehydrogenase family. In terms of assembly, heterotetramer of 2 PreA and 2 PreT subunits.

It catalyses the reaction 5,6-dihydrouracil + NAD(+) = uracil + NADH + H(+). The enzyme catalyses 5,6-dihydrothymine + NAD(+) = thymine + NADH + H(+). In terms of biological role, involved in pyrimidine base degradation. Catalyzes physiologically the reduction of uracil to 5,6-dihydrouracil (DHU) by using NADH as a specific cosubstrate. It also catalyzes the reverse reaction and the reduction of thymine to 5,6-dihydrothymine (DHT). The sequence is that of NAD-dependent dihydropyrimidine dehydrogenase subunit PreT homolog (preT) from Salmonella typhi.